The chain runs to 396 residues: 1-deoxy-D-xylulose 5-phosphate reductoisomerase (396 aa).

NADPH contacts are provided by Thr15, Gly16, Ser17, Ile18, Gly41, and Asn130. Position 131 (Lys131) interacts with 1-deoxy-D-xylulose 5-phosphate. Glu132 is a binding site for NADPH. Asp155 lines the Mn(2+) pocket. Ser156, Glu157, Ser181, and His204 together coordinate 1-deoxy-D-xylulose 5-phosphate. Glu157 contacts Mn(2+). Gly210 provides a ligand contact to NADPH. 1-deoxy-D-xylulose 5-phosphate-binding residues include Ser217, Asn222, Lys223, and Glu226. Position 226 (Glu226) interacts with Mn(2+).

Belongs to the DXR family. The cofactor is Mg(2+). It depends on Mn(2+) as a cofactor.

The catalysed reaction is 2-C-methyl-D-erythritol 4-phosphate + NADP(+) = 1-deoxy-D-xylulose 5-phosphate + NADPH + H(+). Its pathway is isoprenoid biosynthesis; isopentenyl diphosphate biosynthesis via DXP pathway; isopentenyl diphosphate from 1-deoxy-D-xylulose 5-phosphate: step 1/6. Functionally, catalyzes the NADPH-dependent rearrangement and reduction of 1-deoxy-D-xylulose-5-phosphate (DXP) to 2-C-methyl-D-erythritol 4-phosphate (MEP). This Bifidobacterium longum (strain DJO10A) protein is 1-deoxy-D-xylulose 5-phosphate reductoisomerase.